We begin with the raw amino-acid sequence, 212 residues long: ER lumen protein-retaining receptor 1 (212 aa).

The Lumenal portion of the chain corresponds to 1-4; sequence MNIF. A helical transmembrane segment spans residues 5–24; the sequence is RFLGDISHLSAILILLLKIW. Residues 25–32 are Cytoplasmic-facing; sequence KSRSCAGI. The chain crosses the membrane as a helical span at residues 33 to 52; the sequence is SGKSQLLFAIVFTTRYLDLF. Positions 47–48 are interaction with the K-D-E-L motif on target proteins; the sequence is RY. Residues 53-58 lie on the Lumenal side of the membrane; that stretch reads TNFISL. A helical membrane pass occupies residues 59–79; sequence YNTSMKMVYVASSYATIWMIY. The Cytoplasmic segment spans residues 80–92; it reads SKFKATYDGNHDT. The chain crosses the membrane as a helical span at residues 93–110; it reads FRVEFLIVPTAILAFLVN. At 111 to 116 the chain is on the lumenal side; it reads HDFTPL. A helical membrane pass occupies residues 117–135; sequence EILWTFSIYLESVAILPQL. Over 136–149 the chain is Cytoplasmic; that stretch reads FMVSKTGEAETITS. A helical membrane pass occupies residues 150–168; the sequence is HYLFALGIYRALYLFNWIW. An interaction with the K-D-E-L motif on target proteins region spans residues 159–169; that stretch reads RALYLFNWIWR. Residues 169–178 are Lumenal-facing; it reads RYQFEGFFDL. A helical membrane pass occupies residues 179 to 199; sequence IAIVAGLVQTVLYCDFFYLYI. At 200-212 the chain is on the cytoplasmic side; it reads TKVLKGKKLSLPA. Positions 204–207 are important for recycling of cargo proteins with the sequence motif K-D-E-L from the Golgi to the endoplasmic reticulum; that stretch reads KGKK.

This sequence belongs to the ERD2 family.

It is found in the golgi apparatus membrane. It localises to the cytoplasmic vesicle. The protein localises to the COPI-coated vesicle membrane. Its subcellular location is the endoplasmic reticulum membrane. The protein resides in the endoplasmic reticulum-Golgi intermediate compartment membrane. Its function is as follows. Receptor for the C-terminal sequence motif K-D-E-L that is present on endoplasmic reticulum resident proteins and that mediates their recycling from the Golgi back to the endoplasmic reticulum. The sequence is that of ER lumen protein-retaining receptor 1 (kdelr1) from Xenopus tropicalis (Western clawed frog).